Here is a 106-residue protein sequence, read N- to C-terminus: Small ribosomal subunit protein uS10 (106 aa).

It belongs to the universal ribosomal protein uS10 family. In terms of assembly, part of the 30S ribosomal subunit.

Functionally, involved in the binding of tRNA to the ribosomes. This chain is Small ribosomal subunit protein uS10, found in Synechococcus sp. (strain RCC307).